Consider the following 116-residue polypeptide: Protein Rev (116 aa).

Serine 5 and serine 8 each carry phosphoserine; by host CK2. The interval 18 to 26 is homomultimerization; sequence LIKFLYQSN. Residues 23-48 form a disordered region; that stretch reads YQSNPPPSPEGTRQARRNRRRRWRAR. The Nuclear localization signal and RNA-binding (RRE) signature appears at 34-50; that stretch reads TRQARRNRRRRWRARQR. Basic residues predominate over residues 36–48; sequence QARRNRRRRWRAR. The Nuclear export signal and binding to XPO1 motif lies at 73-84; sequence LQLPPLERLNLN. A disordered region spans residues 90-116; the sequence is GTSGTQGVGSPQIPVEPPAVLESGTEE. Phosphoserine; by host occurs at positions 92 and 99.

The protein belongs to the HIV-1 REV protein family. Homomultimer; when bound to the RRE. Multimeric assembly is essential for activity and may involve XPO1. Binds to human KPNB1, XPO1, TNPO1, RANBP5 and IPO7. Interacts with the viral Integrase. Interacts with human KHDRBS1. Interacts with human NAP1; this interaction decreases Rev multimerization and stimulates its activity. Interacts with human DEAD-box helicases DDX3 and DDX24; these interactions may serve for viral RNA export to the cytoplasm and packaging, respectively. Interacts with human PSIP1; this interaction may inhibit HIV-1 DNA integration by promoting dissociation of the Integrase-LEDGF/p75 complex. Asymmetrically arginine dimethylated at one site by host PRMT6. Methylation impairs the RNA-binding activity and export of viral RNA from the nucleus to the cytoplasm. In terms of processing, phosphorylated by protein kinase CK2. Presence of, and maybe binding to the N-terminus of the regulatory beta subunit of CK2 is necessary for CK2-mediated Rev's phosphorylation.

The protein resides in the host nucleus. It is found in the host nucleolus. Its subcellular location is the host cytoplasm. Its function is as follows. Escorts unspliced or incompletely spliced viral pre-mRNAs (late transcripts) out of the nucleus of infected cells. These pre-mRNAs carry a recognition sequence called Rev responsive element (RRE) located in the env gene, that is not present in fully spliced viral mRNAs (early transcripts). This function is essential since most viral proteins are translated from unspliced or partially spliced pre-mRNAs which cannot exit the nucleus by the pathway used by fully processed cellular mRNAs. Rev itself is translated from a fully spliced mRNA that readily exits the nucleus. Rev's nuclear localization signal (NLS) binds directly to KPNB1/Importin beta-1 without previous binding to KPNA1/Importin alpha-1. KPNB1 binds to the GDP bound form of RAN (Ran-GDP) and targets Rev to the nucleus. In the nucleus, the conversion from Ran-GDP to Ran-GTP dissociates Rev from KPNB1 and allows Rev's binding to the RRE in viral pre-mRNAs. Rev multimerization on the RRE via cooperative assembly exposes its nuclear export signal (NES) to the surface. Rev can then form a complex with XPO1/CRM1 and Ran-GTP, leading to nuclear export of the complex. Conversion from Ran-GTP to Ran-GDP mediates dissociation of the Rev/RRE/XPO1/RAN complex, so that Rev can return to the nucleus for a subsequent round of export. Beside KPNB1, also seems to interact with TNPO1/Transportin-1, RANBP5/IPO5 and IPO7/RANBP7 for nuclear import. The nucleoporin-like HRB/RIP is an essential cofactor that probably indirectly interacts with Rev to release HIV RNAs from the perinuclear region to the cytoplasm. The chain is Protein Rev from Homo sapiens (Human).